Reading from the N-terminus, the 371-residue chain is RNA polymerase sigma factor SigA (371 aa).

A sigma-70 factor domain-2 region spans residues 137–207; sequence LAEANLRLVV…TRAIADQART (71 aa). Positions 161–164 match the Interaction with polymerase core subunit RpoC motif; that stretch reads DLIQ. The segment at 216 to 292 is sigma-70 factor domain-3; that stretch reads ETINKLVREQ…DEVIENPVDY (77 aa). A sigma-70 factor domain-4 region spans residues 305–358; sequence VLDTLTDREENVLRLRFGLDDGKMRTLEDVGKVFDVTRERIRQIEAKALRKLRH. Residues 331–350 constitute a DNA-binding region (H-T-H motif); it reads LEDVGKVFDVTRERIRQIEA.

Belongs to the sigma-70 factor family. RpoD/SigA subfamily. Interacts transiently with the RNA polymerase catalytic core.

It localises to the cytoplasm. In terms of biological role, sigma factors are initiation factors that promote the attachment of RNA polymerase to specific initiation sites and are then released. This sigma factor is the primary sigma factor during exponential growth. The polypeptide is RNA polymerase sigma factor SigA (Streptococcus mutans serotype c (strain ATCC 700610 / UA159)).